Here is a 129-residue protein sequence, read N- to C-terminus: Large ribosomal subunit protein uL22 (129 aa).

Belongs to the universal ribosomal protein uL22 family. As to quaternary structure, part of the 50S ribosomal subunit.

In terms of biological role, this protein binds specifically to 23S rRNA; its binding is stimulated by other ribosomal proteins, e.g. L4, L17, and L20. It is important during the early stages of 50S assembly. It makes multiple contacts with different domains of the 23S rRNA in the assembled 50S subunit and ribosome. Its function is as follows. The globular domain of the protein is located near the polypeptide exit tunnel on the outside of the subunit, while an extended beta-hairpin is found that lines the wall of the exit tunnel in the center of the 70S ribosome. This chain is Large ribosomal subunit protein uL22, found in Bartonella henselae (strain ATCC 49882 / DSM 28221 / CCUG 30454 / Houston 1) (Rochalimaea henselae).